Reading from the N-terminus, the 226-residue chain is Regulator of microtubule dynamics protein 1 (226 aa).

Belongs to the FAM82/RMD family. As to quaternary structure, interacts with air-2.

It localises to the cytoplasm. The protein localises to the cytoskeleton. The protein resides in the spindle pole. Its function is as follows. Acts in chromosome segregation and organization during mitosis. The protein is Regulator of microtubule dynamics protein 1 (rmd-1) of Caenorhabditis elegans.